The chain runs to 443 residues: ATP-dependent protease ATPase subunit HslU (443 aa).

ATP contacts are provided by residues isoleucine 18, 60 to 65, aspartate 256, glutamate 321, and arginine 393; that span reads GVGKTE.

It belongs to the ClpX chaperone family. HslU subfamily. A double ring-shaped homohexamer of HslV is capped on each side by a ring-shaped HslU homohexamer. The assembly of the HslU/HslV complex is dependent on binding of ATP.

Its subcellular location is the cytoplasm. Functionally, ATPase subunit of a proteasome-like degradation complex; this subunit has chaperone activity. The binding of ATP and its subsequent hydrolysis by HslU are essential for unfolding of protein substrates subsequently hydrolyzed by HslV. HslU recognizes the N-terminal part of its protein substrates and unfolds these before they are guided to HslV for hydrolysis. This is ATP-dependent protease ATPase subunit HslU from Escherichia coli O139:H28 (strain E24377A / ETEC).